Reading from the N-terminus, the 1154-residue chain is Caspase recruitment domain-containing protein 11 (1154 aa).

The region spanning 18-110 (EEDALWENVE…ELYKLVTGKE (93 aa)) is the CARD domain. Residues 111 to 128 (PTRRFSTIVVEEGHEGLT) are linker. The stretch at 130–449 (FLMNEVIKLQ…KDSNNLDQSL (320 aa)) forms a coiled coil. Residues Ser448 and Ser466 each carry the phosphoserine modification. The segment at 450 to 666 (PRNLPVTIIS…GHVRGPGPSV (217 aa)) is inhibitory domain (ID). The tract at residues 460–626 (QDFGDASPRT…HSSSSSHQSE (167 aa)) is disordered. Residues 473 to 484 (EADDSSTSEESP) are compositionally biased toward acidic residues. The residue at position 512 (Ser512) is a Phosphoserine. The segment covering 518–529 (RTSDFQAKGHEE) has biased composition (basic and acidic residues). Residues 534 to 562 (ASPSSCGSLPITNSFTKMQPPRSRSSIMS) show a composition bias toward polar residues. A Phosphoserine modification is found at Ser535. A Phosphoserine; by PKC/PRKCB and PKC/PRKCQ modification is found at Ser559. Positions 573-587 (IVRRYKEDAPHRSTV) are enriched in basic and acidic residues. Phosphoserine is present on Ser593. The span at 614–625 (SSIHSSSSSHQS) shows a compositional bias: low complexity. 2 positions are modified to phosphoserine; by PKC/PRKCB and PKC/PRKCQ: Ser644 and Ser652. The 89-residue stretch at 667–755 (QHTTLNGDSL…PVTLHYKVNH (89 aa)) folds into the PDZ domain. Residues Ser886 and Ser925 each carry the phosphoserine modification. One can recognise a Guanylate kinase-like domain in the interval 973-1140 (RRRPVLFTPT…LLRVVKDKIG (168 aa)).

In terms of assembly, homodimer; disulfide-linked. Homomultimer; polymerizes following activation, forming a nucleating helical template that seeds BCL10-filament formation via a CARD-CARD interaction. Interacts (via CARD domain) with BCL10 (via CARD domain); interaction takes place following CARD11 activation and polymerization, leading to the formation of a filamentous CBM complex assembly. Component of a CBM complex (CARD11-BCL10-MALT1) complex involved in NF-kappa-B activation. Found in a membrane raft complex, at least composed of BCL10, CARD11, DPP4 and IKBKB. Interacts (via PDZ domain) with DPP4 (via cytoplasmic tail). Post-translationally, phosphorylation at Ser-559, Ser-644 and Ser-652 by PRKCB and PRKCQ leads to a shift from an inactive to an active form that activates the NF-kappa-B signaling. In terms of tissue distribution, detected in adult peripheral blood leukocytes, thymus, spleen and liver. Also found in promyelocytic leukemia HL-60 cells, chronic myelogenous leukemia K-562 cells, Burkitt's lymphoma Raji cells and colorectal adenocarcinoma SW480 cells. Not detected in HeLaS3, MOLT-4, A-549 and G431 cells.

The protein resides in the cytoplasm. It localises to the membrane raft. Its activity is regulated as follows. Maintained in an autoinhibited state via homodimerization in which the CARD domain forms an extensive interaction with the adjacent linker and coiled-coil regions. Activation downstream of T-cell receptor (TCR) by phosphorylation by PRKCB and PRKCQ triggers CARD11 homooligomerization and BCL10 recruitment, followed by activation of NF-kappa-B. Functionally, adapter protein that plays a key role in adaptive immune response by transducing the activation of NF-kappa-B downstream of T-cell receptor (TCR) and B-cell receptor (BCR) engagement. Transduces signals downstream TCR or BCR activation via the formation of a multiprotein complex together with BCL10 and MALT1 that induces NF-kappa-B and MAP kinase p38 (MAPK11, MAPK12, MAPK13 and/or MAPK14) pathways. Upon activation in response to TCR or BCR triggering, CARD11 homooligomerizes to form a nucleating helical template that recruits BCL10 via CARD-CARD interaction, thereby promoting polymerization of BCL10 and subsequent recruitment of MALT1: this leads to I-kappa-B kinase (IKK) phosphorylation and degradation, and release of NF-kappa-B proteins for nuclear translocation. Its binding to DPP4 induces T-cell proliferation and NF-kappa-B activation in a T-cell receptor/CD3-dependent manner. Promotes linear ubiquitination of BCL10 by promoting the targeting of BCL10 to RNF31/HOIP. Stimulates the phosphorylation of BCL10. Also activates the TORC1 signaling pathway. This Homo sapiens (Human) protein is Caspase recruitment domain-containing protein 11.